The sequence spans 431 residues: Adenylosuccinate synthetase (431 aa).

Residues 13-19 (GDEGKGK) and 41-43 (GHT) each bind GTP. The active-site Proton acceptor is aspartate 14. Mg(2+) contacts are provided by aspartate 14 and glycine 41. IMP is bound by residues 14 to 17 (DEGK), 39 to 42 (NAGH), threonine 130, arginine 144, glutamine 225, threonine 240, and arginine 304. The active-site Proton donor is histidine 42. Residue 300 to 306 (ATTGRER) coordinates substrate. GTP contacts are provided by residues arginine 306, 332-334 (KLD), and 415-417 (STG).

Belongs to the adenylosuccinate synthetase family. As to quaternary structure, homodimer. Mg(2+) serves as cofactor.

Its subcellular location is the cytoplasm. It catalyses the reaction IMP + L-aspartate + GTP = N(6)-(1,2-dicarboxyethyl)-AMP + GDP + phosphate + 2 H(+). The protein operates within purine metabolism; AMP biosynthesis via de novo pathway; AMP from IMP: step 1/2. Plays an important role in the de novo pathway of purine nucleotide biosynthesis. Catalyzes the first committed step in the biosynthesis of AMP from IMP. The protein is Adenylosuccinate synthetase of Colwellia psychrerythraea (strain 34H / ATCC BAA-681) (Vibrio psychroerythus).